The sequence spans 336 residues: uncharacterized protein (336 aa).

Residues 297–316 (KKDLQKSEEEEHPNDDHVYM) show a composition bias toward basic and acidic residues. The tract at residues 297 to 336 (KKDLQKSEEEEHPNDDHVYMTEEDDMEKIERGIESLGNGH) is disordered.

This is an uncharacterized protein from Invertebrate iridescent virus 6 (IIV-6).